Consider the following 155-residue polypeptide: Methylated-DNA--protein-cysteine methyltransferase (155 aa).

C119 functions as the Nucleophile; methyl group acceptor in the catalytic mechanism.

This sequence belongs to the MGMT family.

The protein resides in the cytoplasm. The catalysed reaction is a 6-O-methyl-2'-deoxyguanosine in DNA + L-cysteinyl-[protein] = S-methyl-L-cysteinyl-[protein] + a 2'-deoxyguanosine in DNA. It catalyses the reaction a 4-O-methyl-thymidine in DNA + L-cysteinyl-[protein] = a thymidine in DNA + S-methyl-L-cysteinyl-[protein]. Involved in the cellular defense against the biological effects of O6-methylguanine (O6-MeG) and O4-methylthymine (O4-MeT) in DNA. Repairs the methylated nucleobase in DNA by stoichiometrically transferring the methyl group to a cysteine residue in the enzyme. This is a suicide reaction: the enzyme is irreversibly inactivated. The protein is Methylated-DNA--protein-cysteine methyltransferase of Sulfolobus acidocaldarius (strain ATCC 33909 / DSM 639 / JCM 8929 / NBRC 15157 / NCIMB 11770).